The following is a 511-amino-acid chain: Acidic amino acid decarboxylase GADL1 (511 aa).

Lys-323 is subject to N6-(pyridoxal phosphate)lysine.

It belongs to the group II decarboxylase family. As to quaternary structure, homodimer. Pyridoxal 5'-phosphate is required as a cofactor.

It catalyses the reaction L-aspartate + H(+) = beta-alanine + CO2. The enzyme catalyses 3-sulfino-L-alanine + H(+) = hypotaurine + CO2. In terms of biological role, catalyzes the decarboxylation of L-aspartate, 3-sulfino-L-alanine (cysteine sulfinic acid), and L-cysteate to beta-alanine, hypotaurine and taurine, respectively. The preferred substrate is L-aspartate. Does not exhibit any decarboxylation activity toward glutamate. This Xenopus tropicalis (Western clawed frog) protein is Acidic amino acid decarboxylase GADL1 (gadl1).